We begin with the raw amino-acid sequence, 473 residues long: Photosystem II CP43 reaction center protein (473 aa).

Positions 1 to 14 (MKTLYSLRRFYHVE) are excised as a propeptide. Thr15 is subject to N-acetylthreonine. Thr15 is modified (phosphothreonine). A run of 5 helical transmembrane segments spans residues 69–93 (LFEV…PHLA), 134–155 (LLGP…KDRN), 178–200 (KALY…RKIT), 255–275 (KPFA…LSYS), and 291–312 (WFNN…ASQA). [CaMn4O5] cluster is bound at residue Glu367. Residues 447-471 (RARAAAAGFEKGIDRDFEPVLFMTP) traverse the membrane as a helical segment.

It belongs to the PsbB/PsbC family. PsbC subfamily. In terms of assembly, PSII is composed of 1 copy each of membrane proteins PsbA, PsbB, PsbC, PsbD, PsbE, PsbF, PsbH, PsbI, PsbJ, PsbK, PsbL, PsbM, PsbT, PsbX, PsbY, PsbZ, Psb30/Ycf12, at least 3 peripheral proteins of the oxygen-evolving complex and a large number of cofactors. It forms dimeric complexes. Binds multiple chlorophylls and provides some of the ligands for the Ca-4Mn-5O cluster of the oxygen-evolving complex. It may also provide a ligand for a Cl- that is required for oxygen evolution. PSII binds additional chlorophylls, carotenoids and specific lipids. serves as cofactor.

The protein resides in the plastid. The protein localises to the chloroplast thylakoid membrane. Its function is as follows. One of the components of the core complex of photosystem II (PSII). It binds chlorophyll and helps catalyze the primary light-induced photochemical processes of PSII. PSII is a light-driven water:plastoquinone oxidoreductase, using light energy to abstract electrons from H(2)O, generating O(2) and a proton gradient subsequently used for ATP formation. The protein is Photosystem II CP43 reaction center protein of Solanum tuberosum (Potato).